The following is a 1452-amino-acid chain: Pleiotropic drug resistance protein 1 (1452 aa).

Residues 152–425 (LNYLHILPNR…FEYMGFICPE (274 aa)) form the ABC transporter 1 domain. 185 to 192 (GPPSSGKT) is an ATP binding site. The ABC transmembrane type-2 1 domain occupies 504–716 (LLKACTAREY…AQNAIAVNEF (213 aa)). 7 helical membrane-spanning segments follow: residues 521 to 541 (FVYIFKMIQLTLMASITMTLF), 554 to 574 (GAVFLGALFYALIMIMFNGFS), 609 to 629 (IPITLVEVAIWVCMTYYVIGF), 640 to 660 (LLLLICVNQMASGLFRLMGAL), 664 to 684 (IIVANTFGSFVLLTVLVMGGF), 694 to 714 (WWIWGYWISPMMYAQNAIAVN), and 753 to 773 (IGAGALIGYVFLFNFLFAVAL). The tract at residues 808 to 830 (LGKSSSEKGNDVRRSASSRSMSS) is disordered. The segment covering 812–821 (SSEKGNDVRR) has biased composition (basic and acidic residues). In terms of domain architecture, ABC transporter 2 spans 855–1107 (ITFDDIRYAV…HLIKYFEGID (253 aa)). 900–907 (GVSGAGKT) is an ATP binding site. In terms of domain architecture, ABC transmembrane type-2 2 spans 1180 to 1394 (TQCMACFWKQ…TLYGLIASQF (215 aa)). 7 helical membrane passes run 1199 to 1219 (YTAVRIMFTFFIALMFGTIFW), 1239 to 1259 (YIAVLFLGVQNATTVQPVIAI), 1287 to 1307 (LPYLFLQTIIYGVIVYAMIGF), 1314 to 1334 (FFWYLFFMYFTLLYFTLYGMM), 1344 to 1364 (IAAIISSAFYAVWNLFCGFIV), 1375 to 1395 (WYYYICPISWTLYGLIASQFG), and 1421 to 1441 (FVGYVALILVGISVLFLFIFA).

The protein belongs to the ABC transporter superfamily. ABCG family. PDR (TC 3.A.1.205) subfamily. As to expression, expressed in root hypodermal passage cells. Expressed in stem tissues, particularly the vasculature and nodes adjacent to leaf axils.

It localises to the cell membrane. Cellular strigolactone (SL) transporter required for the exudation of SL from the root to the soil. The presence of SL in the vicinity of the roots is required for development of symbiotic interactions with arbuscular mycorrhizal fungi (AMF). Transports SL in the above ground tissues and is required for the control of shoot branching. SL regulates plant shoot architecture by inhibiting the outgrowth of axillary buds. Involved in the regulation of shootward and outward directional strigolactone transport in roots. Due to its polar localization in root cells, mediates directional shootward strigolactone transport, as well as localized outward directional transport for exudation to the soil. The protein is Pleiotropic drug resistance protein 1 of Petunia hybrida (Petunia).